The sequence spans 157 residues: Phosphopantetheine adenylyltransferase (157 aa).

Residue serine 9 participates in substrate binding. ATP contacts are provided by residues 9–10 (SF) and histidine 17. Lysine 41, threonine 73, and arginine 87 together coordinate substrate. ATP is bound by residues 88 to 90 (GIR), glutamate 98, and 122 to 128 (YQDISSS).

This sequence belongs to the bacterial CoaD family. As to quaternary structure, homohexamer. Requires Mg(2+) as cofactor.

The protein resides in the cytoplasm. The enzyme catalyses (R)-4'-phosphopantetheine + ATP + H(+) = 3'-dephospho-CoA + diphosphate. Its pathway is cofactor biosynthesis; coenzyme A biosynthesis; CoA from (R)-pantothenate: step 4/5. In terms of biological role, reversibly transfers an adenylyl group from ATP to 4'-phosphopantetheine, yielding dephospho-CoA (dPCoA) and pyrophosphate. The chain is Phosphopantetheine adenylyltransferase from Oenococcus oeni (strain ATCC BAA-331 / PSU-1).